The chain runs to 889 residues: Disease resistance protein RPS5 (889 aa).

A lipid anchor (N-myristoyl glycine) is attached at Gly-2. Cys-4 carries S-palmitoyl cysteine lipidation. The stretch at Ile-29–Glu-58 forms a coiled coil. Residues Ser-140–Gly-444 form the NB-ARC domain. Residue Gly-183–Thr-190 coordinates ATP. LRR repeat units lie at residues Thr-518–Ala-539, Ala-540–Cys-561, His-564–Leu-586, Ser-588–Lys-610, Lys-611–Trp-633, and Asn-634–Gln-656.

Belongs to the disease resistance NB-LRR family. In terms of assembly, in uninfected plants, interacts with PBS1 through the coiled coil domain. Homodimer.

It localises to the cell membrane. In terms of biological role, disease resistance (R) protein that specifically recognizes the avrPphB type III effector avirulence protein from Pseudomonas syringae. Also confers resistance against Hyaloperonospora parasitica (downy mildew). Resistance proteins guard the plant against pathogens that contain an appropriate avirulence protein via an indirect interaction with this avirulence protein. That triggers a defense system including the hypersensitive response, which restricts the pathogen growth. Requires PBS1 to trigger the defense reaction against avrPphB. In case of infection by Pseudomonas syringae, AvrPphB triggers RPS5-mediated defense mechanism via the cleavage of PBS1, suggesting that the cleavage of PBS1 could trigger an exchange of ADP for ATP, thereby activating RPS5. May function as a fine-tuned sensor of alterations in the structure of the effector target PBS1. This Arabidopsis thaliana (Mouse-ear cress) protein is Disease resistance protein RPS5 (RPS5).